Reading from the N-terminus, the 189-residue chain is Protein CotJC (189 aa).

This sequence belongs to the manganese catalase family.

In terms of biological role, the cotJ operon proteins affect spore coat composition. They are either required for the normal formation of the inner layers of the coat or are themselves structural components of the coat. The sequence is that of Protein CotJC (cotJC) from Bacillus subtilis (strain 168).